The following is a 407-amino-acid chain: Phosphopentomutase (407 aa).

Mn(2+)-binding residues include D10, D306, H311, D347, H348, and H359.

Belongs to the phosphopentomutase family. It depends on Mn(2+) as a cofactor.

It localises to the cytoplasm. It carries out the reaction 2-deoxy-alpha-D-ribose 1-phosphate = 2-deoxy-D-ribose 5-phosphate. It catalyses the reaction alpha-D-ribose 1-phosphate = D-ribose 5-phosphate. It participates in carbohydrate degradation; 2-deoxy-D-ribose 1-phosphate degradation; D-glyceraldehyde 3-phosphate and acetaldehyde from 2-deoxy-alpha-D-ribose 1-phosphate: step 1/2. Its function is as follows. Isomerase that catalyzes the conversion of deoxy-ribose 1-phosphate (dRib-1-P) and ribose 1-phosphate (Rib-1-P) to deoxy-ribose 5-phosphate (dRib-5-P) and ribose 5-phosphate (Rib-5-P), respectively. The polypeptide is Phosphopentomutase (Cronobacter sakazakii (strain ATCC BAA-894) (Enterobacter sakazakii)).